Here is a 338-residue protein sequence, read N- to C-terminus: Holliday junction branch migration complex subunit RuvB (338 aa).

Residues 1–181 (MDRIVEIEKV…FGMDFRLQFY (181 aa)) form a large ATPase domain (RuvB-L) region. ATP is bound by residues L20, R21, G62, K65, T66, T67, 128–130 (EDF), R171, Y181, and R218. Position 66 (T66) interacts with Mg(2+). Positions 182–252 (STAELSRIIQ…RAKEGLNALG (71 aa)) are small ATPAse domain (RuvB-S). The interval 255 to 338 (SLGFDEMDIK…NRTKGLFDGE (84 aa)) is head domain (RuvB-H). Residues R309 and R314 each coordinate DNA.

Belongs to the RuvB family. Homohexamer. Forms an RuvA(8)-RuvB(12)-Holliday junction (HJ) complex. HJ DNA is sandwiched between 2 RuvA tetramers; dsDNA enters through RuvA and exits via RuvB. An RuvB hexamer assembles on each DNA strand where it exits the tetramer. Each RuvB hexamer is contacted by two RuvA subunits (via domain III) on 2 adjacent RuvB subunits; this complex drives branch migration. In the full resolvosome a probable DNA-RuvA(4)-RuvB(12)-RuvC(2) complex forms which resolves the HJ.

It localises to the cytoplasm. The enzyme catalyses ATP + H2O = ADP + phosphate + H(+). The RuvA-RuvB-RuvC complex processes Holliday junction (HJ) DNA during genetic recombination and DNA repair, while the RuvA-RuvB complex plays an important role in the rescue of blocked DNA replication forks via replication fork reversal (RFR). RuvA specifically binds to HJ cruciform DNA, conferring on it an open structure. The RuvB hexamer acts as an ATP-dependent pump, pulling dsDNA into and through the RuvAB complex. RuvB forms 2 homohexamers on either side of HJ DNA bound by 1 or 2 RuvA tetramers; 4 subunits per hexamer contact DNA at a time. Coordinated motions by a converter formed by DNA-disengaged RuvB subunits stimulates ATP hydrolysis and nucleotide exchange. Immobilization of the converter enables RuvB to convert the ATP-contained energy into a lever motion, pulling 2 nucleotides of DNA out of the RuvA tetramer per ATP hydrolyzed, thus driving DNA branch migration. The RuvB motors rotate together with the DNA substrate, which together with the progressing nucleotide cycle form the mechanistic basis for DNA recombination by continuous HJ branch migration. Branch migration allows RuvC to scan DNA until it finds its consensus sequence, where it cleaves and resolves cruciform DNA. The sequence is that of Holliday junction branch migration complex subunit RuvB from Campylobacter curvus (strain 525.92).